The primary structure comprises 152 residues: Biogenesis of lysosome-related organelles complex 1 subunit 1 (152 aa).

It belongs to the BLOC1S1 family. As to quaternary structure, component of the biogenesis of lysosome-related organelles complex-1 (BLOC-1). Interacts with BLOS2 and SNX1. As to expression, expressed in the whole plant (at protein level).

Its subcellular location is the cytoplasm. It is found in the endosome. Functionally, component of the biogenesis of lysosome-related organelles complex-1 (BLOC-1), a complex that mediates the vacuolar degradative transport via the intracellular vesicle trafficking from the endosome to the vacuole. Probably regulates the PIN1 and PIN2 homeostasis through its interaction with SNX1. This Arabidopsis thaliana (Mouse-ear cress) protein is Biogenesis of lysosome-related organelles complex 1 subunit 1 (BLOS1).